Reading from the N-terminus, the 251-residue chain is GTP cyclohydrolase 1 type 2 homolog (251 aa).

Histidine 63, histidine 64, aspartate 101, histidine 219, and glutamate 223 together coordinate a divalent metal cation.

It belongs to the GTP cyclohydrolase I type 2/NIF3 family. In terms of assembly, toroid-shaped homohexamer. In the hexamer, 3 dimers assemble to form a ring-like structure surrounding a central hole.

This Haemophilus influenzae (strain ATCC 51907 / DSM 11121 / KW20 / Rd) protein is GTP cyclohydrolase 1 type 2 homolog.